The chain runs to 714 residues: Zinc finger matrin-type protein 1 (714 aa).

The Matrin-type 1 zinc-finger motif lies at 89–119; that stretch reads NFCKPCGVVLQHESERISHFESEIHAQNVKF. The tract at residues 172–214 is disordered; the sequence is HYVGKSHSPTQNQSLEEHDQVSPSTCSPKMDEPNTTPAPPPFL. The Matrin-type 2 zinc finger occupies 230-254; it reads YVCHICSITFTSLHMFRSHMQGTEH. Residues 417 to 434 are compositionally biased toward basic and acidic residues; it reads RERVDSEHRQRPCEERFS. Disordered regions lie at residues 417-469 and 571-714; these read RERV…NDDF and MPAS…ILGF. 2 stretches are compositionally biased toward polar residues: residues 437 to 446 and 575 to 588; these read APQTYQQEYS and LSLS…SSYN. The segment covering 609 to 619 has biased composition (basic residues); sequence SHRRRRQKRKR. Basic and acidic residues-rich tracts occupy residues 620–632 and 640–662; these read HLEE…EKEQ and SYQD…EDKA. Residues 669–678 are compositionally biased toward basic residues; it reads TKHRRKKRKH.

It is found in the nucleus. This Mus musculus (Mouse) protein is Zinc finger matrin-type protein 1 (Zmat1).